Consider the following 122-residue polypeptide: Large-conductance mechanosensitive channel (122 aa).

Transmembrane regions (helical) follow at residues 14 to 34 and 67 to 87; these read VLDLAVGVIIGAAFTALVKSL and GAFLNDVINFIITAFVIFILI.

It belongs to the MscL family. Homopentamer.

It localises to the cell membrane. Functionally, channel that opens in response to stretch forces in the membrane lipid bilayer. May participate in the regulation of osmotic pressure changes within the cell. This is Large-conductance mechanosensitive channel from Lactococcus lactis subsp. lactis (strain IL1403) (Streptococcus lactis).